A 414-amino-acid chain; its full sequence is Protein MAK11 (414 aa).

Position 2 is an N-acetylserine (Ser2). WD repeat units follow at residues 50 to 78 (AHSL…RIYD), 90 to 135 (SHQG…MVWR), 147 to 177 (GHTA…RLWN), 189 to 221 (LRKY…LIYE), 238 to 267 (LMHI…HFYP), and 298 to 330 (GHTN…VVWD). A phosphoserine mark is found at Ser376 and Ser380. Thr382 carries the post-translational modification Phosphothreonine.

As to quaternary structure, associates with 60S pre-ribosomal particles.

The protein localises to the nucleus. The protein resides in the nucleolus. It is found in the nucleus membrane. In terms of biological role, essential for cell growth. Plays a role in assembly of 60S pre-ribosomal particles in the nucleolus. Also required for replication of the M1 double-stranded RNA of the L-A virus. This latter function may reflect an enhanced requirement for free 60S ribosomal particles for the translation of viral mRNAs which lack poly-A tails. This chain is Protein MAK11 (MAK11), found in Saccharomyces cerevisiae (strain ATCC 204508 / S288c) (Baker's yeast).